Reading from the N-terminus, the 96-residue chain is Uteroglobin (96 aa).

The first 19 residues, 1–19 (MKIAITITVLMLSICCSSA), serve as a signal peptide directing secretion.

It belongs to the secretoglobin family. Antiparallel homodimer; disulfide-linked. Interaction with LMBR1L is controversial. Club cells (nonciliated cells of the surface epithelium of the pulmonary airways).

It is found in the secreted. Functionally, binds phosphatidylcholine, phosphatidylinositol, polychlorinated biphenyls (PCB) and weakly progesterone, potent inhibitor of phospholipase A2. In Rattus norvegicus (Rat), this protein is Uteroglobin (Scgb1a1).